Reading from the N-terminus, the 305-residue chain is Aspartate carbamoyltransferase catalytic subunit (305 aa).

Residues arginine 51 and threonine 52 each coordinate carbamoyl phosphate. L-aspartate is bound at residue lysine 79. Arginine 101, histidine 129, and glutamine 132 together coordinate carbamoyl phosphate. L-aspartate is bound by residues arginine 165 and arginine 220. Glycine 258 and proline 259 together coordinate carbamoyl phosphate.

This sequence belongs to the aspartate/ornithine carbamoyltransferase superfamily. ATCase family. As to quaternary structure, heterododecamer (2C3:3R2) of six catalytic PyrB chains organized as two trimers (C3), and six regulatory PyrI chains organized as three dimers (R2).

It carries out the reaction carbamoyl phosphate + L-aspartate = N-carbamoyl-L-aspartate + phosphate + H(+). The protein operates within pyrimidine metabolism; UMP biosynthesis via de novo pathway; (S)-dihydroorotate from bicarbonate: step 2/3. Its function is as follows. Catalyzes the condensation of carbamoyl phosphate and aspartate to form carbamoyl aspartate and inorganic phosphate, the committed step in the de novo pyrimidine nucleotide biosynthesis pathway. In Rubrobacter xylanophilus (strain DSM 9941 / JCM 11954 / NBRC 16129 / PRD-1), this protein is Aspartate carbamoyltransferase catalytic subunit.